The following is a 197-amino-acid chain: NADH-quinone oxidoreductase subunit B (197 aa).

4 residues coordinate [4Fe-4S] cluster: Cys-76, Cys-77, Cys-141, and Cys-171.

Belongs to the complex I 20 kDa subunit family. NDH-1 is composed of 14 different subunits. Subunits NuoB, C, D, E, F, and G constitute the peripheral sector of the complex. Requires [4Fe-4S] cluster as cofactor.

It is found in the cell inner membrane. It carries out the reaction a quinone + NADH + 5 H(+)(in) = a quinol + NAD(+) + 4 H(+)(out). Functionally, NDH-1 shuttles electrons from NADH, via FMN and iron-sulfur (Fe-S) centers, to quinones in the respiratory chain. The immediate electron acceptor for the enzyme in this species is believed to be ubiquinone. Couples the redox reaction to proton translocation (for every two electrons transferred, four hydrogen ions are translocated across the cytoplasmic membrane), and thus conserves the redox energy in a proton gradient. This is NADH-quinone oxidoreductase subunit B from Methylobacterium nodulans (strain LMG 21967 / CNCM I-2342 / ORS 2060).